We begin with the raw amino-acid sequence, 320 residues long: Aspartate carbamoyltransferase catalytic subunit (320 aa).

Residues R68 and T69 each coordinate carbamoyl phosphate. K96 serves as a coordination point for L-aspartate. Carbamoyl phosphate contacts are provided by R118, H148, and Q151. L-aspartate contacts are provided by R181 and R236. Carbamoyl phosphate-binding residues include G277 and P278.

The protein belongs to the aspartate/ornithine carbamoyltransferase superfamily. ATCase family. As to quaternary structure, heterododecamer (2C3:3R2) of six catalytic PyrB chains organized as two trimers (C3), and six regulatory PyrI chains organized as three dimers (R2).

The catalysed reaction is carbamoyl phosphate + L-aspartate = N-carbamoyl-L-aspartate + phosphate + H(+). The protein operates within pyrimidine metabolism; UMP biosynthesis via de novo pathway; (S)-dihydroorotate from bicarbonate: step 2/3. In terms of biological role, catalyzes the condensation of carbamoyl phosphate and aspartate to form carbamoyl aspartate and inorganic phosphate, the committed step in the de novo pyrimidine nucleotide biosynthesis pathway. This Paracidovorax citrulli (strain AAC00-1) (Acidovorax citrulli) protein is Aspartate carbamoyltransferase catalytic subunit.